The following is a 220-amino-acid chain: Dual specificity phosphatase 29 (220 aa).

The 149-residue stretch at 54–202 folds into the Tyrosine-protein phosphatase domain; sequence HVNEVWPKLY…LRELDKQLVQ (149 aa). 146–153 contributes to the substrate binding site; that stretch reads HCVMGRSR. Catalysis depends on cysteine 147, which acts as the Phosphocysteine intermediate.

The protein belongs to the protein-tyrosine phosphatase family. Non-receptor class dual specificity subfamily. As to quaternary structure, homodimer. Interacts with PRKAA2.

It localises to the cytoplasm. It is found in the nucleus. It carries out the reaction O-phospho-L-tyrosyl-[protein] + H2O = L-tyrosyl-[protein] + phosphate. The enzyme catalyses O-phospho-L-seryl-[protein] + H2O = L-seryl-[protein] + phosphate. The catalysed reaction is O-phospho-L-threonyl-[protein] + H2O = L-threonyl-[protein] + phosphate. Dual specificity phosphatase able to dephosphorylate phosphotyrosine, phosphoserine and phosphothreonine residues within the same substrate, with a preference for phosphotyrosine as a substrate. Involved in the modulation of intracellular signaling cascades. In skeletal muscle regulates systemic glucose homeostasis by activating, AMPK, an energy sensor protein kinase. Affects MAP kinase signaling though modulation of the ERK1/2 cascade in skeletal muscle promoting muscle cell differentiation, development and atrophy. In Pan troglodytes (Chimpanzee), this protein is Dual specificity phosphatase 29 (DUSP29).